The following is a 216-amino-acid chain: Cytochrome c biogenesis ATP-binding export protein CcmA (216 aa).

Positions 5 to 216 (ISVDTLLSAS…RKIRLDYRFV (212 aa)) constitute an ABC transporter domain. ATP is bound at residue 43–50 (GPNGAGKT).

The protein belongs to the ABC transporter superfamily. CcmA exporter (TC 3.A.1.107) family. As to quaternary structure, the complex is composed of two ATP-binding proteins (CcmA) and two transmembrane proteins (CcmB).

The protein resides in the cell inner membrane. It carries out the reaction heme b(in) + ATP + H2O = heme b(out) + ADP + phosphate + H(+). In terms of biological role, part of the ABC transporter complex CcmAB involved in the biogenesis of c-type cytochromes; once thought to export heme, this seems not to be the case, but its exact role is uncertain. Responsible for energy coupling to the transport system. The protein is Cytochrome c biogenesis ATP-binding export protein CcmA of Shewanella oneidensis (strain ATCC 700550 / JCM 31522 / CIP 106686 / LMG 19005 / NCIMB 14063 / MR-1).